The chain runs to 346 residues: MAVDVKSRAKRYEKLDFLGEGQFATVYKARDKNTNQIVAIKKIKLGHRSEAKDGINRTALREIKLLQELSHPNIIGLLDAFGHKSNISLVFDFMETDLEVIIKDNSLVLTPSHIKAYMLMTLQGLEYLHQHWILHRDLKPNNLLLDENGVLKLADFGLAKSFGSPNRAYTHQVVTRWYRAPELLFGARMYGVGVDMWAVGCILAELLLRVPFLPGDSDLDQLTRIFETLGTPTEEQWPDMCSLPDYVTFKSFPGVPLQHIFIAAGDDLLELIQGLFLFNPCTRTTASQALKTKYFSNRPGPTPGCQLPRPNCPVEALKEPANPTVATKRKRAEALEQGILPKKLIF.

At alanine 2 the chain carries N-acetylalanine. Serine 7 carries the phosphoserine modification. One can recognise a Protein kinase domain in the interval 12-295 (YEKLDFLGEG…ASQALKTKYF (284 aa)). Residues 18–26 (LGEGQFATV) and lysine 41 each bind ATP. The active-site Proton acceptor is aspartate 137. The residue at position 164 (serine 164) is a Phosphoserine; by CDK1 and CDK2. Threonine 170 bears the Phosphothreonine; by CDK2 mark.

The protein belongs to the protein kinase superfamily. CMGC Ser/Thr protein kinase family. CDC2/CDKX subfamily. Associates primarily with cyclin-H (CCNH) and MAT1 to form the CAK complex. CAK can further associate with the core-TFIIH to form the TFIIH basal transcription factor; this complex is sensitive to UV light. The CAK complex binds to p53/TP53 in response to DNA damage. Interacts with CDK2, SF1/NR5A1, PUF60 and PRKCI. Interacts with HINT1. Phosphorylation of Ser-164 during mitosis inactivates the enzyme. Phosphorylation of Thr-170 is required for activity. Phosphorylated at Ser-164 and Thr-170 by CDK2.

It localises to the nucleus. It is found in the cytoplasm. Its subcellular location is the perinuclear region. The catalysed reaction is L-seryl-[protein] + ATP = O-phospho-L-seryl-[protein] + ADP + H(+). The enzyme catalyses L-threonyl-[protein] + ATP = O-phospho-L-threonyl-[protein] + ADP + H(+). It carries out the reaction [DNA-directed RNA polymerase] + ATP = phospho-[DNA-directed RNA polymerase] + ADP + H(+). With respect to regulation, phosphorylation at Thr-170 is required for enzymatic activity. The association of p53/TP53 to the CAK complex in response to DNA damage reduces kinase activity toward CDK2 and RNA polymerase II repetitive C-terminal domain (CTD), thus stopping cell cycle progression. Serine/threonine kinase involved in cell cycle control and in RNA polymerase II-mediated RNA transcription. Cyclin-dependent kinases (CDKs) are activated by the binding to a cyclin and mediate the progression through the cell cycle. Each different complex controls a specific transition between 2 subsequent phases in the cell cycle. Required for both activation and complex formation of CDK1/cyclin-B during G2-M transition, and for activation of CDK2/cyclins during G1-S transition (but not complex formation). CDK7 is the catalytic subunit of the CDK-activating kinase (CAK) complex. Phosphorylates SPT5/SUPT5H, SF1/NR5A1, POLR2A, p53/TP53, CDK1, CDK2, CDK4, CDK6 and CDK11B/CDK11. Initiates transcription by RNA polymerase II by mediating phosphorylation of POLR2A at 'Ser-5' of the repetitive C-terminal domain (CTD) when POLR2A is in complex with DNA, promoting dissociation from DNA and initiation. CAK activates the cyclin-associated kinases CDK1, CDK2, CDK4 and CDK6 by threonine phosphorylation, thus regulating cell cycle progression. CAK complexed to the core-TFIIH basal transcription factor activates RNA polymerase II by serine phosphorylation of the CTD of POLR2A, allowing its escape from the promoter and elongation of the transcripts. Its expression and activity are constant throughout the cell cycle. Upon DNA damage, triggers p53/TP53 activation by phosphorylation, but is inactivated in turn by p53/TP53; this feedback loop may lead to an arrest of the cell cycle and of the transcription, helping in cell recovery, or to apoptosis. Required for DNA-bound peptides-mediated transcription and cellular growth inhibition. This chain is Cyclin-dependent kinase 7 (Cdk7), found in Mus musculus (Mouse).